The chain runs to 352 residues: Nicotinate-nucleotide--dimethylbenzimidazole phosphoribosyltransferase (352 aa).

The Proton acceptor role is filled by Glu-318.

It belongs to the CobT family.

It catalyses the reaction 5,6-dimethylbenzimidazole + nicotinate beta-D-ribonucleotide = alpha-ribazole 5'-phosphate + nicotinate + H(+). The protein operates within nucleoside biosynthesis; alpha-ribazole biosynthesis; alpha-ribazole from 5,6-dimethylbenzimidazole: step 1/2. In terms of biological role, catalyzes the synthesis of alpha-ribazole-5'-phosphate from nicotinate mononucleotide (NAMN) and 5,6-dimethylbenzimidazole (DMB). This is Nicotinate-nucleotide--dimethylbenzimidazole phosphoribosyltransferase from Azotobacter vinelandii (strain DJ / ATCC BAA-1303).